The chain runs to 77 residues: Small ribosomal subunit protein bS20 (77 aa).

It belongs to the bacterial ribosomal protein bS20 family.

Functionally, binds directly to 16S ribosomal RNA. The sequence is that of Small ribosomal subunit protein bS20 from Streptococcus uberis (strain ATCC BAA-854 / 0140J).